Here is a 900-residue protein sequence, read N- to C-terminus: Minor teichoic acid biosynthesis protein GgaB (900 aa).

It belongs to the glycosyltransferase 2 family.

It participates in cell wall biogenesis; poly(glucopyranosyl N-acetylgalactosamine 1-phosphate) teichoic acid biosynthesis. Functionally, involved in the biosynthesis of galactosamine-containing minor teichoic acid, a non-essential cell wall polymer in B.subtilis 168. The sequence is that of Minor teichoic acid biosynthesis protein GgaB (ggaB) from Bacillus subtilis (strain 168).